A 430-amino-acid chain; its full sequence is Inner membrane transport protein YbaT (430 aa).

Residues 1–14 (MMNTEGNNGNKPLG) lie on the Cytoplasmic side of the membrane. A helical membrane pass occupies residues 15 to 35 (LWNVVSIGIGAMVGAGIFALL). Residues 36–38 (GQA) are Periplasmic-facing. A helical transmembrane segment spans residues 39-59 (ALLMEASTWVAFAFGGIVAMF). Residues 60-88 (SGYAYARLGASYPSNGGIIDFFRRGLGNG) lie on the Cytoplasmic side of the membrane. Residues 89–109 (VFSLALSLLYLLTLAVSIAMV) form a helical membrane-spanning segment. Residues 110–128 (ARAFGAYAVQFLHEGSQEE) are Periplasmic-facing. Residues 129 to 149 (HLILLYALGIIAVMTLFNSLS) traverse the membrane as a helical segment. The Cytoplasmic portion of the chain corresponds to 150–157 (NHAVGRLE). A helical transmembrane segment spans residues 158 to 178 (VILVGIKMMILLLLIIAGVWS). At 179-192 (LQPAHISVSAPPSS) the chain is on the periplasmic side. Residues 193-213 (GAFFSCIGITFLAYAGFGMMA) traverse the membrane as a helical segment. Residues 214–228 (NAADKVKDPQVIMPR) lie on the Cytoplasmic side of the membrane. A helical transmembrane segment spans residues 229–249 (AFLVAIGVTTLLYISLALVLL). At 250 to 272 (SDVSALELEKYADTAVAQAASPL) the chain is on the periplasmic side. Residues 273-293 (LGHVGYVIVVIGALLATASAI) form a helical membrane-spanning segment. Residues 294–325 (NANLFAVFNIMDNMGSERELPKLMNKSLWRQS) lie on the Cytoplasmic side of the membrane. The helical transmembrane segment at 326–346 (TWGNIIVVVLIMLMTAALNLG) threads the bilayer. Ser-347 is a topological domain (periplasmic). The chain crosses the membrane as a helical span at residues 348–368 (LASVASATFLICYLAVFVVAI). At 369–379 (RLRHDIHASLP) the chain is on the cytoplasmic side. A helical transmembrane segment spans residues 380-400 (ILIVGTLVMLLVIVGFIYSLW). Residues 401–403 (SQG) lie on the Periplasmic side of the membrane. The chain crosses the membrane as a helical span at residues 404–424 (SRALIWIIGSLLLSLIVAMVM). At 425-430 (KRNKTV) the chain is on the cytoplasmic side.

It belongs to the amino acid-polyamine-organocation (APC) superfamily.

The protein localises to the cell inner membrane. Functionally, probable amino-acid or metabolite transport protein. This Escherichia coli (strain K12) protein is Inner membrane transport protein YbaT (ybaT).